The following is a 907-amino-acid chain: DNA mismatch repair protein MutS (907 aa).

Position 656 to 663 (656 to 663) interacts with ATP; the sequence is GPNMAGKS.

It belongs to the DNA mismatch repair MutS family.

Functionally, this protein is involved in the repair of mismatches in DNA. It is possible that it carries out the mismatch recognition step. This protein has a weak ATPase activity. The protein is DNA mismatch repair protein MutS of Nitrobacter hamburgensis (strain DSM 10229 / NCIMB 13809 / X14).